The following is a 203-amino-acid chain: Putative 3-methyladenine DNA glycosylase (203 aa).

Belongs to the DNA glycosylase MPG family.

This chain is Putative 3-methyladenine DNA glycosylase, found in Clostridium botulinum (strain Loch Maree / Type A3).